The chain runs to 213 residues: Imidazole glycerol phosphate synthase subunit HisH (213 aa).

The 212-residue stretch at 1 to 212 (MLAILDYKAG…HRYCTEAADA (212 aa)) folds into the Glutamine amidotransferase type-1 domain. Cys79 serves as the catalytic Nucleophile. Catalysis depends on residues His187 and Glu189.

As to quaternary structure, heterodimer of HisH and HisF.

The protein localises to the cytoplasm. The catalysed reaction is 5-[(5-phospho-1-deoxy-D-ribulos-1-ylimino)methylamino]-1-(5-phospho-beta-D-ribosyl)imidazole-4-carboxamide + L-glutamine = D-erythro-1-(imidazol-4-yl)glycerol 3-phosphate + 5-amino-1-(5-phospho-beta-D-ribosyl)imidazole-4-carboxamide + L-glutamate + H(+). The enzyme catalyses L-glutamine + H2O = L-glutamate + NH4(+). It participates in amino-acid biosynthesis; L-histidine biosynthesis; L-histidine from 5-phospho-alpha-D-ribose 1-diphosphate: step 5/9. Its function is as follows. IGPS catalyzes the conversion of PRFAR and glutamine to IGP, AICAR and glutamate. The HisH subunit catalyzes the hydrolysis of glutamine to glutamate and ammonia as part of the synthesis of IGP and AICAR. The resulting ammonia molecule is channeled to the active site of HisF. The polypeptide is Imidazole glycerol phosphate synthase subunit HisH (Nitratidesulfovibrio vulgaris (strain DP4) (Desulfovibrio vulgaris)).